Reading from the N-terminus, the 842-residue chain is DNA mismatch repair protein MutS (842 aa).

ATP is bound at residue 596-603 (GPNMSGKS).

It belongs to the DNA mismatch repair MutS family.

This protein is involved in the repair of mismatches in DNA. It is possible that it carries out the mismatch recognition step. This protein has a weak ATPase activity. In Exiguobacterium sp. (strain ATCC BAA-1283 / AT1b), this protein is DNA mismatch repair protein MutS.